The primary structure comprises 92 residues: UPF0473 protein BCE33L4129 (92 aa).

Belongs to the UPF0473 family.

The sequence is that of UPF0473 protein BCE33L4129 from Bacillus cereus (strain ZK / E33L).